Reading from the N-terminus, the 1374-residue chain is MAAPNRDPPGYRYAAAMVPTGSLLSTIEVASHRRLFDFFSRVRSDANSLYDVEFDALLGSYCNTLSLVRFLELGLSVACVCTKFPELAYMNEGRVQFEVHQPLIARDGPHPIEQPTHNYMTKIIDRRALNAAFSLATEAIALLTGEALDGTGIGAHRQLRAIQQLARNVQAVLGAFERGTADQMLHVLLEKAPPLALLLPMQRYLDNGRLATRVARATLVAELKRSFCETSFFLGKAGHRREAVEAWLVDLTTATQPSVAVPRLTHADTRGRPVDGVLVTTAPIKQRLLQSFLKVEDTEADVPVTYGEMVLNGANLVTALVMGKAVRSLDDVGRHLLEMQEEQLDLNRQTLDELESAPQTTRVRADLVSIGEKLVFLEALEKRIYAATNVPYPLVGAMDLTFVLPLGLFNPVMERFAAHAGDLVPAPGHPDPRAFPPRQLFFWGKDRQVLRLSLEHAIGTVCHPSLMNVDAAVGGLNRDPVEAANPYGAYVAAPAGPAADMQQLFLNAWGQRLAHGRVRWVAEGQMTPEQFMQPDNANLALELHPAFDFFVGVADVELPGGDVPPAGPGEIQATWRVVNGNLPLALCPAAFRDARGLELGVGRHAMAPATIAAVRGAFDDRNYPAVFYLLQAAIHGSEHVFCALARLVVQCITSYWNNTRCAAFVNDYSLVSYVVTYLGGDLPEECMAVYRDLVAHVEALAQLVDDFTLTGPELGGQAQAELNHLMRDPALLPPLVWDCDALMRRAALDRHRDCRVSAGGHDPVYAAACNVATADFNRNDGQLLHNTQARAADAADDRPHRGADWTVHHKIYYYVMVPAFSRGRCCTAGVRFDRVYATLQNMVVPEIAPGEECPSDPVTDPAHPLHPANLVANTVNAMFHNGRVVVDGPAMLTLQVLAHNMAERTTALLCSAAPDAGANTASTTNMRIFDGALHAGILLMAPQHLDHTIQNGDYFYPLPVHALFAGADHVANAPNFPPALRDLSRQVPLVPPALGANYFSSIRQPVVQHVRESAAGENALTYALMAGYFKISPVALHHQLKTGLHPGFGFTVVRQDRFVTENVLFSERASEAYFLGQLQVARHETGGGVNFTLTQPRANVDLGVGYTAVVATATVRNPVTDMGNLPQNFYLGRGAPPLLDNAAAVYLRNAVVAGNRLGPAQPVPVFGCAQVPRRAGMDHGQDAVCEFIATPVSTDVNYFRRPCNPRGRAAGGVYAGDKEGDVTALMYDHGQSDPSRAFAATANPWASQRFSYGDLLYNGAYHLNGASPVLSPCFKFFTSADIAAKHRCLERLIVETGSAVSTATAASDVQFKRPPGCRELVEDPCGLFQEAYPLTCASDPALLRSARNGEAHARETHFAQYLVYDASPLKGLAL.

Belongs to the herpesviridae major capsid protein family. As to quaternary structure, homomultimer. Makes the hexons and eleven out of twelve pentons. Interacts with triplex proteins 1/TRX1 and 2/TRX2; adjacent capsomers are linked together in groups of three by triplexes, heterotrimeric complexes composed of one molecule of TRX1 and two molecules of TRX2. Interacts with scaffold protein; this interaction allows efficient MCP transport to the host nucleus. Interacts with capsid vertex component 2/CVC2. Interacts with the small capsomere-interacting protein/SCP.

Its subcellular location is the virion. It localises to the host nucleus. Functionally, self-assembles to form an icosahedral capsid with a T=16 symmetry, about 200 nm in diameter, and consisting of 150 hexons and 12 pentons (total of 162 capsomers). Hexons form the edges and faces of the capsid and are each composed of six MCP molecules. In contrast, one penton is found at each of the 12 vertices. Eleven of the pentons are MCP pentamers, while the last vertex is occupied by the portal complex. The capsid is surrounded by a layer of proteinaceous material designated the tegument which, in turn, is enclosed in an envelope of host cell-derived lipids containing virus-encoded glycoproteins. This Homo sapiens (Human) protein is Major capsid protein.